The following is a 69-amino-acid chain: UPF0346 protein YuiB (69 aa).

The protein belongs to the UPF0346 family.

This chain is UPF0346 protein YuiB (yuiB), found in Lactococcus lactis subsp. lactis (strain IL1403) (Streptococcus lactis).